Reading from the N-terminus, the 628-residue chain is Chaperone protein DnaK (628 aa).

Phosphothreonine; by autocatalysis is present on Thr197. Residues 597–628 (EQMYKGEQGAQGGAADTSKKKSDDDVIDAEIE) form a disordered region.

It belongs to the heat shock protein 70 family.

Functionally, acts as a chaperone. This Sulfurimonas denitrificans (strain ATCC 33889 / DSM 1251) (Thiomicrospira denitrificans (strain ATCC 33889 / DSM 1251)) protein is Chaperone protein DnaK.